Consider the following 204-residue polypeptide: Large ribosomal subunit protein uL4 (204 aa).

A disordered region spans residues 49 to 72 (QKNRAAVSGGGKKPWRQKGTGRAR).

This sequence belongs to the universal ribosomal protein uL4 family. As to quaternary structure, part of the 50S ribosomal subunit.

In terms of biological role, one of the primary rRNA binding proteins, this protein initially binds near the 5'-end of the 23S rRNA. It is important during the early stages of 50S assembly. It makes multiple contacts with different domains of the 23S rRNA in the assembled 50S subunit and ribosome. Functionally, forms part of the polypeptide exit tunnel. The sequence is that of Large ribosomal subunit protein uL4 from Saccharophagus degradans (strain 2-40 / ATCC 43961 / DSM 17024).